The chain runs to 186 residues: Ribosome-recycling factor (186 aa).

The protein belongs to the RRF family.

Its subcellular location is the cytoplasm. Functionally, responsible for the release of ribosomes from messenger RNA at the termination of protein biosynthesis. May increase the efficiency of translation by recycling ribosomes from one round of translation to another. This Rickettsia prowazekii (strain Madrid E) protein is Ribosome-recycling factor.